The chain runs to 267 residues: 3-deoxy-manno-octulosonate cytidylyltransferase (267 aa).

This sequence belongs to the KdsB family.

The protein localises to the cytoplasm. It catalyses the reaction 3-deoxy-alpha-D-manno-oct-2-ulosonate + CTP = CMP-3-deoxy-beta-D-manno-octulosonate + diphosphate. It participates in nucleotide-sugar biosynthesis; CMP-3-deoxy-D-manno-octulosonate biosynthesis; CMP-3-deoxy-D-manno-octulosonate from 3-deoxy-D-manno-octulosonate and CTP: step 1/1. The protein operates within bacterial outer membrane biogenesis; lipopolysaccharide biosynthesis. Activates KDO (a required 8-carbon sugar) for incorporation into bacterial lipopolysaccharide in Gram-negative bacteria. The sequence is that of 3-deoxy-manno-octulosonate cytidylyltransferase from Paraburkholderia phymatum (strain DSM 17167 / CIP 108236 / LMG 21445 / STM815) (Burkholderia phymatum).